Reading from the N-terminus, the 86-residue chain is METSHSFGAKVLIGAIRIYQLMISPLIGPRCRFVPTCSCYGIQAVKTHGVVKGSWLTVKRILKCHPFNVGGYDPVPPKINNNKENE.

It belongs to the UPF0161 family.

The protein localises to the cell inner membrane. Functionally, could be involved in insertion of integral membrane proteins into the membrane. This chain is Putative membrane protein insertion efficiency factor, found in Histophilus somni (strain 129Pt) (Haemophilus somnus).